A 201-amino-acid polypeptide reads, in one-letter code: Probable nicotinate-nucleotide adenylyltransferase (201 aa).

This sequence belongs to the NadD family.

The enzyme catalyses nicotinate beta-D-ribonucleotide + ATP + H(+) = deamido-NAD(+) + diphosphate. The protein operates within cofactor biosynthesis; NAD(+) biosynthesis; deamido-NAD(+) from nicotinate D-ribonucleotide: step 1/1. Catalyzes the reversible adenylation of nicotinate mononucleotide (NaMN) to nicotinic acid adenine dinucleotide (NaAD). The chain is Probable nicotinate-nucleotide adenylyltransferase from Neisseria meningitidis serogroup C / serotype 2a (strain ATCC 700532 / DSM 15464 / FAM18).